The following is a 267-amino-acid chain: Glutamate racemase (267 aa).

Residues 10 to 11 (DS) and 42 to 43 (YG) contribute to the substrate site. Cys73 functions as the Proton donor/acceptor in the catalytic mechanism. 74 to 75 (NT) contributes to the substrate binding site. Cys183 acts as the Proton donor/acceptor in catalysis. Position 184 to 185 (184 to 185 (TH)) interacts with substrate.

It belongs to the aspartate/glutamate racemases family.

It catalyses the reaction L-glutamate = D-glutamate. It participates in cell wall biogenesis; peptidoglycan biosynthesis. Its function is as follows. Provides the (R)-glutamate required for cell wall biosynthesis. The sequence is that of Glutamate racemase from Lactobacillus acidophilus (strain ATCC 700396 / NCK56 / N2 / NCFM).